Consider the following 345-residue polypeptide: Aspartate--ammonia ligase (345 aa).

Belongs to the class-II aminoacyl-tRNA synthetase family. AsnA subfamily.

The protein resides in the cytoplasm. It carries out the reaction L-aspartate + NH4(+) + ATP = L-asparagine + AMP + diphosphate + H(+). Its pathway is amino-acid biosynthesis; L-asparagine biosynthesis; L-asparagine from L-aspartate (ammonia route): step 1/1. The chain is Aspartate--ammonia ligase from Parabacteroides distasonis (strain ATCC 8503 / DSM 20701 / CIP 104284 / JCM 5825 / NCTC 11152).